The chain runs to 582 residues: L-fucose isomerase (582 aa).

Active-site proton acceptor residues include Glu-333 and Asp-357. Mn(2+)-binding residues include Glu-333, Asp-357, and His-520.

This sequence belongs to the L-fucose isomerase family. Mn(2+) serves as cofactor.

It localises to the cytoplasm. The enzyme catalyses L-fucose = L-fuculose. The protein operates within carbohydrate degradation; L-fucose degradation; L-lactaldehyde and glycerone phosphate from L-fucose: step 1/3. In terms of biological role, converts the aldose L-fucose into the corresponding ketose L-fuculose. This Vibrio vulnificus (strain YJ016) protein is L-fucose isomerase.